Consider the following 574-residue polypeptide: MAFNFNWSPLMADAGFYTRAQDLLTTALNKSPKPPIIVDDIVVTELNLGSIPPELEILEIGDLAEDRFRGIFKMSYSGDAFLTLKTRVQANPLNTYLITRPAYASPKPLAAASGLTIPLQITLSNFRLSGFVILVFSKQKGITVVFRNDPLESLKVSSTFDSIPSVRDYLQREIEGQLRILFMDELPAIIHRLSLRLWVPEYRGLDAEARESPAASASGPGEDPLLSPPKDPVDASGNLLSSADIASLSLDSGVEMHSLFSQKNLLRLAALTNSQRTLSLFTPSIREVVFRAWTGCADQGEGAASGVVSPGSPVLSRTHSHISSPLSSLQDASSVLSLQNRSTTPGSSFSGYGLSLGAGRHSKTRPTRKRKKRVVDLRKHNKPADAESVSADSTFTESTTPPTVFSSSVIQEEANDDPVTPPMSPETTMRIPNRQHRFSTSEDKGKLRASVAQQLTYTQPSHSTLHAQRANHCPMIPLSADGAKTSSQQQPISHGSYLAPREKSHEASSAYESNANRSITDAVPNSSILEQAWMMKMANEIARRIQEGKFAANNNYPGAWEQARARTPPPAYGQ.

Positions 1–195 (MAFNFNWSPL…LPAIIHRLSL (195 aa)) constitute an SMP-LTD domain. Disordered stretches follow at residues 210-233 (RESP…KDPV), 301-403 (EGAA…TPPT), and 479-515 (SADG…ESNA). Composition is skewed to low complexity over residues 212 to 224 (SPAA…GEDP), 302 to 314 (GAAS…GSPV), and 323 to 334 (SSPLSSLQDASS). The span at 335 to 345 (VLSLQNRSTTP) shows a compositional bias: polar residues. Residues 346-359 (GSSFSGYGLSLGAG) are compositionally biased toward low complexity. The segment covering 360-373 (RHSKTRPTRKRKKR) has biased composition (basic residues). Basic and acidic residues predominate over residues 374-385 (VVDLRKHNKPAD). Low complexity predominate over residues 393–403 (STFTESTTPPT). A compositionally biased stretch (polar residues) spans 484 to 493 (KTSSQQQPIS).

This sequence belongs to the MDM34 family. In terms of assembly, component of the ER-mitochondria encounter structure (ERMES) or MDM complex, composed of MMM1, MDM10, MDM12 and MDM34.

The protein localises to the mitochondrion outer membrane. Its function is as follows. Component of the ERMES/MDM complex, which serves as a molecular tether to connect the endoplasmic reticulum (ER) and mitochondria. Components of this complex are involved in the control of mitochondrial shape and protein biogenesis, and function in nonvesicular lipid trafficking between the ER and mitochondria. MDM34 is required for the interaction of the ER-resident membrane protein MMM1 and the outer mitochondrial membrane-resident beta-barrel protein MDM10. The sequence is that of Mitochondrial distribution and morphology protein 34 from Coccidioides immitis (strain RS) (Valley fever fungus).